The chain runs to 370 residues: Polyadenylate-binding protein 4-like (370 aa).

4 consecutive RRM domains span residues 10-88 (ASLY…WSQR), 98-174 (GNVF…RFKN), 190-267 (TNVY…RAQK), and 293-369 (VKLY…LAQR).

It belongs to the polyadenylate-binding protein type-1 family.

Its function is as follows. May bind RNA. This Homo sapiens (Human) protein is Polyadenylate-binding protein 4-like (PABPC4L).